A 237-amino-acid polypeptide reads, in one-letter code: 3-oxoacyl-[acyl-carrier-protein] reductase (237 aa).

M1 carries the N-acetylmethionine modification. NADP(+)-binding positions include 11-14 (SRGI) and 34-35 (RN). At K40 the chain carries N6-acetyllysine. Residues D56 and 83–85 (AAG) each bind NADP(+). K96 carries the N6-acetyllysine modification. Position 135 (S135) interacts with substrate. Residues Y148, K152, and 181–183 (VHT) each bind NADP(+). The active-site Proton acceptor is the Y148. K195 carries the post-translational modification N6-acetyllysine.

Belongs to the short-chain dehydrogenases/reductases (SDR) family. Homotetramer (in vitro). Heterotetramer with HSD17B8; contains two molecules each of HSD17B8 and CBR4. Does not form homotetramers when HSD17B8 is coexpressed, only heterotetramers (in vitro). Detected in liver and kidney (at protein level). Displays the highest expression in neuronal and muscle tissues.

Its subcellular location is the mitochondrion matrix. The enzyme catalyses a (3R)-hydroxyacyl-[ACP] + NADP(+) = a 3-oxoacyl-[ACP] + NADPH + H(+). It catalyses the reaction a quinone + NADPH + H(+) = a quinol + NADP(+). It functions in the pathway lipid metabolism; fatty acid biosynthesis. Component of the heterotetramer complex KAR (3-ketoacyl-[acyl carrier protein] reductase or 3-ketoacyl-[ACP] reductase) that forms part of the mitochondrial fatty acid synthase (mtFAS). Beta-subunit of the KAR heterotetramer complex, responsible for the 3-ketoacyl-ACP reductase activity of the mtFAS, reduces 3-oxoacyl-[ACP] to (3R)-hydroxyacyl-[ACP] in a NADPH-dependent manner with no chain length preference, thereby participating in mitochondrial fatty acid biosynthesis. The homotetramer has NADPH-dependent quinone reductase activity (in vitro), hence could play a role in protection against cytotoxicity of exogenous quinones. As a heterotetramer, it can also reduce 9,10-phenanthrenequinone, 1,4-benzoquinone and various other o-quinones and p-quinones (in vitro). This is 3-oxoacyl-[acyl-carrier-protein] reductase (CBR4) from Homo sapiens (Human).